The chain runs to 1402 residues: Nuclear pore complex protein Nup160 (1402 aa).

A phosphoserine mark is found at serine 10, serine 456, serine 915, and serine 1123.

As to quaternary structure, part of the nuclear pore complex (NPC). Forms part of the NUP160 subcomplex in the nuclear pore which is composed of NUP160, NUP133, NUP107 and NUP96. This complex plays a role in RNA export and in tethering NUP98 and NUP153 to the nucleus.

Its subcellular location is the nucleus. The protein localises to the nuclear pore complex. Functionally, functions as a component of the nuclear pore complex (NPC). Involved in poly(A)+ RNA transport. The protein is Nuclear pore complex protein Nup160 (Nup160) of Mus musculus (Mouse).